Here is a 348-residue protein sequence, read N- to C-terminus: 4-hydroxy-2-oxovalerate aldolase 2 (348 aa).

Residues 5–256 (LQICDSTLRD…EARIKLFDAL (252 aa)) enclose the Pyruvate carboxyltransferase domain. A substrate-binding site is contributed by 13–14 (RD). Position 14 (D14) interacts with Mn(2+). H17 acts as the Proton acceptor in catalysis. 2 residues coordinate substrate: S168 and H195. Mn(2+)-binding residues include H195 and H197.

It belongs to the 4-hydroxy-2-oxovalerate aldolase family.

The enzyme catalyses (S)-4-hydroxy-2-oxopentanoate = acetaldehyde + pyruvate. The chain is 4-hydroxy-2-oxovalerate aldolase 2 from Salinispora arenicola (strain CNS-205).